We begin with the raw amino-acid sequence, 391 residues long: Acetate kinase (391 aa).

Asparagine 4 is a Mg(2+) binding site. Position 11 (lysine 11) interacts with ATP. Arginine 85 contacts substrate. Aspartate 142 functions as the Proton donor/acceptor in the catalytic mechanism. ATP contacts are provided by residues 202-206 (HLGNG), 277-279 (DLR), and 325-329 (GIGEN). Residue glutamate 378 coordinates Mg(2+).

The protein belongs to the acetokinase family. In terms of assembly, homodimer. Mg(2+) serves as cofactor. Mn(2+) is required as a cofactor.

The protein resides in the cytoplasm. The catalysed reaction is acetate + ATP = acetyl phosphate + ADP. The protein operates within metabolic intermediate biosynthesis; acetyl-CoA biosynthesis; acetyl-CoA from acetate: step 1/2. Functionally, catalyzes the formation of acetyl phosphate from acetate and ATP. Can also catalyze the reverse reaction. This is Acetate kinase from Halalkalibacterium halodurans (strain ATCC BAA-125 / DSM 18197 / FERM 7344 / JCM 9153 / C-125) (Bacillus halodurans).